The following is a 218-amino-acid chain: Adenylate kinase (218 aa).

ATP is bound at residue 11–16; sequence GAGKGT. The NMP stretch occupies residues 31–60; that stretch reads STGDMFREAMANKTKVGLEAKSYIDKGNLV. AMP-binding positions include T32, R37, 58–60, 86–89, and Q93; these read NLV and GFPR. Residues 127–165 form an LID region; sequence ARYMCKNCGATYNKLSKQPKVEGTCDRCGSHEFYQREDD. Position 128 (R128) interacts with ATP. Zn(2+)-binding residues include C131 and C134. 137–138 contributes to the ATP binding site; that stretch reads TY. Zn(2+) is bound by residues C151 and C154. Residues R162 and R173 each coordinate AMP. Q201 is an ATP binding site.

The protein belongs to the adenylate kinase family. Monomer.

The protein localises to the cytoplasm. The catalysed reaction is AMP + ATP = 2 ADP. It participates in purine metabolism; AMP biosynthesis via salvage pathway; AMP from ADP: step 1/1. Its function is as follows. Catalyzes the reversible transfer of the terminal phosphate group between ATP and AMP. Plays an important role in cellular energy homeostasis and in adenine nucleotide metabolism. In Lactobacillus helveticus (strain DPC 4571), this protein is Adenylate kinase.